A 421-amino-acid polypeptide reads, in one-letter code: Transcription factor rglT (421 aa).

Positions 1–29 are disordered; it reads MQYEAYQWGQSHPTSTSGSMLQDTPTAAS. Polar residues predominate over residues 8-29; the sequence is WGQSHPTSTSGSMLQDTPTAAS. Residues 38 to 65 constitute a DNA-binding region (zn(2)-C6 fungal-type); the sequence is CDECRKRKLKCSGEISGCSRCIKQSLSC. The segment covering 346-357 has biased composition (basic and acidic residues); it reads EARQRRWHESPD. The disordered stretch occupies residues 346-371; that stretch reads EARQRRWHESPDSHPLPPDQRLNIPS.

Its subcellular location is the nucleus. In terms of biological role, transcription factor that is important for oxidative stress resistance and essential for gliotoxin (GT) self-protection through the regulation of a gene encoding a putative gliT homolog, even if E.nidulans does not produce gliotoxin itself. This Emericella nidulans (strain FGSC A4 / ATCC 38163 / CBS 112.46 / NRRL 194 / M139) (Aspergillus nidulans) protein is Transcription factor rglT.